We begin with the raw amino-acid sequence, 570 residues long: Sulfite reductase [NADPH] hemoprotein beta-component (570 aa).

[4Fe-4S] cluster is bound by residues cysteine 434, cysteine 440, cysteine 479, and cysteine 483. Cysteine 483 is a binding site for siroheme.

Belongs to the nitrite and sulfite reductase 4Fe-4S domain family. As to quaternary structure, alpha(8)-beta(8). The alpha component is a flavoprotein, the beta component is a hemoprotein. The cofactor is siroheme. [4Fe-4S] cluster serves as cofactor.

The catalysed reaction is hydrogen sulfide + 3 NADP(+) + 3 H2O = sulfite + 3 NADPH + 4 H(+). It functions in the pathway sulfur metabolism; hydrogen sulfide biosynthesis; hydrogen sulfide from sulfite (NADPH route): step 1/1. Its function is as follows. Component of the sulfite reductase complex that catalyzes the 6-electron reduction of sulfite to sulfide. This is one of several activities required for the biosynthesis of L-cysteine from sulfate. The chain is Sulfite reductase [NADPH] hemoprotein beta-component from Escherichia coli O127:H6 (strain E2348/69 / EPEC).